Reading from the N-terminus, the 511-residue chain is 2-isopropylmalate synthase (511 aa).

The region spanning 6–269 is the Pyruvate carboxyltransferase domain; the sequence is IIIFDTTLRD…YTDIKCENIF (264 aa). Mn(2+) is bound by residues Asp-15, His-203, His-205, and Asn-239. The segment at 394 to 511 is regulatory domain; the sequence is ILEKLSVISG…SLKVEERKMA (118 aa).

This sequence belongs to the alpha-IPM synthase/homocitrate synthase family. LeuA type 1 subfamily. As to quaternary structure, homodimer. The cofactor is Mn(2+).

It localises to the cytoplasm. It carries out the reaction 3-methyl-2-oxobutanoate + acetyl-CoA + H2O = (2S)-2-isopropylmalate + CoA + H(+). It participates in amino-acid biosynthesis; L-leucine biosynthesis; L-leucine from 3-methyl-2-oxobutanoate: step 1/4. In terms of biological role, catalyzes the condensation of the acetyl group of acetyl-CoA with 3-methyl-2-oxobutanoate (2-ketoisovalerate) to form 3-carboxy-3-hydroxy-4-methylpentanoate (2-isopropylmalate). The chain is 2-isopropylmalate synthase from Campylobacter jejuni subsp. jejuni serotype O:6 (strain 81116 / NCTC 11828).